Consider the following 366-residue polypeptide: Phenylalanine--tRNA ligase alpha subunit (366 aa).

Position 259 (Glu259) interacts with Mg(2+).

Belongs to the class-II aminoacyl-tRNA synthetase family. Phe-tRNA synthetase alpha subunit type 1 subfamily. In terms of assembly, tetramer of two alpha and two beta subunits. It depends on Mg(2+) as a cofactor.

Its subcellular location is the cytoplasm. The enzyme catalyses tRNA(Phe) + L-phenylalanine + ATP = L-phenylalanyl-tRNA(Phe) + AMP + diphosphate + H(+). The chain is Phenylalanine--tRNA ligase alpha subunit from Erythrobacter litoralis (strain HTCC2594).